Reading from the N-terminus, the 200-residue chain is Small ribosomal subunit protein uS4 (200 aa).

The interval 1 to 43 (MARYTGPRGRRDRRAGVMLSSMRKNPLEKKPYPPGEHGRDRQR) is disordered. Positions 25–43 (NPLEKKPYPPGEHGRDRQR) are enriched in basic and acidic residues. One can recognise an S4 RNA-binding domain in the interval 92 to 158 (LRMDNVVYRM…QPIQEAVEQV (67 aa)).

It belongs to the universal ribosomal protein uS4 family. In terms of assembly, part of the 30S ribosomal subunit. Contacts protein S5. The interaction surface between S4 and S5 is involved in control of translational fidelity.

In terms of biological role, one of the primary rRNA binding proteins, it binds directly to 16S rRNA where it nucleates assembly of the body of the 30S subunit. Functionally, with S5 and S12 plays an important role in translational accuracy. This Rubrobacter xylanophilus (strain DSM 9941 / JCM 11954 / NBRC 16129 / PRD-1) protein is Small ribosomal subunit protein uS4.